The primary structure comprises 409 residues: Homoserine O-succinyltransferase (409 aa).

The region spanning 43–380 is the AB hydrolase-1 domain; it reads NAIVVCHALN…PHGHDAFLLD (338 aa). Ser-149 (nucleophile) is an active-site residue. Arg-219 contributes to the substrate binding site. Residues 244–268 are disordered; that stretch reads TLPAARGSLPPEGTDPTRGGPASDR. Catalysis depends on residues Asp-341 and His-374. Asp-375 serves as a coordination point for substrate.

Belongs to the AB hydrolase superfamily. MetX family. As to quaternary structure, homodimer.

It localises to the cytoplasm. The enzyme catalyses L-homoserine + succinyl-CoA = O-succinyl-L-homoserine + CoA. It functions in the pathway amino-acid biosynthesis; L-methionine biosynthesis via de novo pathway; O-succinyl-L-homoserine from L-homoserine: step 1/1. Transfers a succinyl group from succinyl-CoA to L-homoserine, forming succinyl-L-homoserine. The sequence is that of Homoserine O-succinyltransferase from Comamonas testosteroni (strain DSM 14576 / KF-1) (Pseudomonas testosteroni).